Here is a 444-residue protein sequence, read N- to C-terminus: 23S rRNA (uracil(1939)-C(5))-methyltransferase RlmD (444 aa).

One can recognise a TRAM domain in the interval 5-67 (RNRFDRTPFQ…RHFDEAKTVE (63 aa)). [4Fe-4S] cluster is bound by residues C80, C86, C89, and C168. S-adenosyl-L-methionine is bound by residues Q276, F305, N310, E326, D353, and D374. The active-site Nucleophile is the C400.

The protein belongs to the class I-like SAM-binding methyltransferase superfamily. RNA M5U methyltransferase family. RlmD subfamily.

It carries out the reaction uridine(1939) in 23S rRNA + S-adenosyl-L-methionine = 5-methyluridine(1939) in 23S rRNA + S-adenosyl-L-homocysteine + H(+). Its function is as follows. Catalyzes the formation of 5-methyl-uridine at position 1939 (m5U1939) in 23S rRNA. This is 23S rRNA (uracil(1939)-C(5))-methyltransferase RlmD from Xanthomonas oryzae pv. oryzae (strain MAFF 311018).